The primary structure comprises 207 residues: Ribosomal RNA small subunit methyltransferase G (207 aa).

Residues Gly74, Leu79, 125 to 126 (VE), and Arg140 contribute to the S-adenosyl-L-methionine site.

Belongs to the methyltransferase superfamily. RNA methyltransferase RsmG family.

The protein localises to the cytoplasm. The catalysed reaction is guanosine(527) in 16S rRNA + S-adenosyl-L-methionine = N(7)-methylguanosine(527) in 16S rRNA + S-adenosyl-L-homocysteine. Functionally, specifically methylates the N7 position of guanine in position 527 of 16S rRNA. The polypeptide is Ribosomal RNA small subunit methyltransferase G (Shewanella halifaxensis (strain HAW-EB4)).